The primary structure comprises 591 residues: Probable metalloprotease ARX1 (591 aa).

This sequence belongs to the peptidase M24 family. Component of the nucleoplasmic and cytoplasmic pre-60S ribosomal particles.

The protein resides in the cytoplasm. It localises to the nucleus. Functionally, probable metalloprotease involved in proper assembly of pre-ribosomal particles during the biogenesis of the 60S ribosomal subunit. Accompanies the pre-60S particles to the cytoplasm. The protein is Probable metalloprotease ARX1 (ARX1) of Eremothecium gossypii (strain ATCC 10895 / CBS 109.51 / FGSC 9923 / NRRL Y-1056) (Yeast).